We begin with the raw amino-acid sequence, 388 residues long: Na(+)/H(+) antiporter NhaA (388 aa).

Helical transmembrane passes span 14-34 (GGIILIIAAALAMLMANMGAT), 59-79 (MLLWINDALMAVFFLLIGLEV), 95-115 (AFPVIAAIGGMIVPALLYLAF), 125-145 (GWAIPAATDIAFALGVLALLG), 154-174 (IFLMALAIIDDLGAIVIIALF), 179-199 (LSIVSLGVAAFAIAVLALLNL), 219-239 (VLKSGVHATLAGVIVGFFIPL), 254-274 (VLHPWVAYLILPLFAFANAGV), 292-312 (IIAGLLIGKPLGISLFCWLAL), 328-348 (IMAVGILCGIGFTMSIFIASL), and 360-380 (WAKLGILIGSLLSAVVGYSWL).

This sequence belongs to the NhaA Na(+)/H(+) (TC 2.A.33) antiporter family.

Its subcellular location is the cell inner membrane. The catalysed reaction is Na(+)(in) + 2 H(+)(out) = Na(+)(out) + 2 H(+)(in). Functionally, na(+)/H(+) antiporter that extrudes sodium in exchange for external protons. The sequence is that of Na(+)/H(+) antiporter NhaA from Salmonella choleraesuis (strain SC-B67).